The primary structure comprises 147 residues: 3-dehydroquinate dehydratase (147 aa).

Y24 serves as the catalytic Proton acceptor. Substrate contacts are provided by N74, H80, and D87. The active-site Proton donor is H100. Residues 101–102 and R111 each bind substrate; that span reads LS.

This sequence belongs to the type-II 3-dehydroquinase family. Homododecamer.

It carries out the reaction 3-dehydroquinate = 3-dehydroshikimate + H2O. Its pathway is metabolic intermediate biosynthesis; chorismate biosynthesis; chorismate from D-erythrose 4-phosphate and phosphoenolpyruvate: step 3/7. Catalyzes a trans-dehydration via an enolate intermediate. This Azorhizobium caulinodans (strain ATCC 43989 / DSM 5975 / JCM 20966 / LMG 6465 / NBRC 14845 / NCIMB 13405 / ORS 571) protein is 3-dehydroquinate dehydratase.